Here is a 374-residue protein sequence, read N- to C-terminus: Serine/threonine-protein kinase-transforming protein mos (374 aa).

The Protein kinase domain maps to 94–370 (VCLMHRLGSG…LLQRDLKAFR (277 aa)). ATP contacts are provided by residues 100–108 (LGSGGFGSV) and lysine 121. The Proton acceptor role is filled by aspartate 229.

This sequence belongs to the protein kinase superfamily. Ser/Thr protein kinase family.

It carries out the reaction L-seryl-[protein] + ATP = O-phospho-L-seryl-[protein] + ADP + H(+). The enzyme catalyses L-threonyl-[protein] + ATP = O-phospho-L-threonyl-[protein] + ADP + H(+). This is Serine/threonine-protein kinase-transforming protein mos (V-MOS) from Mus musculus (Mouse).